Here is a 218-residue protein sequence, read N- to C-terminus: Small ribosomal subunit protein uS3 (218 aa).

The region spanning 38-106 is the KH type-2 domain; sequence IREYISKRLQ…RVHINIVEIK (69 aa).

This sequence belongs to the universal ribosomal protein uS3 family. As to quaternary structure, part of the 30S ribosomal subunit. Forms a tight complex with proteins S10 and S14.

Binds the lower part of the 30S subunit head. Binds mRNA in the 70S ribosome, positioning it for translation. The polypeptide is Small ribosomal subunit protein uS3 (Geobacillus kaustophilus (strain HTA426)).